The primary structure comprises 272 residues: uncharacterized protein (272 aa).

NAD(+) contacts are provided by residues 12-34 (FITG…DGAN), 39-40 (DI), 77-78 (DV), and N104. S153 provides a ligand contact to substrate. Y170 serves as the catalytic Proton acceptor. NAD(+) is bound by residues K174 and 203-205 (VDT).

It belongs to the short-chain dehydrogenases/reductases (SDR) family.

This is an uncharacterized protein from Mycobacterium tuberculosis (strain CDC 1551 / Oshkosh).